The primary structure comprises 490 residues: Betaine aldehyde dehydrogenase (490 aa).

The K(+) site is built by isoleucine 27 and aspartate 93. An NAD(+)-binding site is contributed by 150–152 (GAW). The active-site Charge relay system is the lysine 162. 176-179 (KPSE) serves as a coordination point for NAD(+). Valine 180 is a binding site for K(+). 230–233 (GTTT) is an NAD(+) binding site. Residue leucine 246 participates in K(+) binding. Catalysis depends on glutamate 252, which acts as the Proton acceptor. Residues glycine 254, cysteine 286, and glutamate 387 each coordinate NAD(+). The active-site Nucleophile is the cysteine 286. Cysteine 286 carries the cysteine sulfenic acid (-SOH) modification. Residues lysine 457 and glycine 460 each coordinate K(+). Glutamate 464 functions as the Charge relay system in the catalytic mechanism.

Belongs to the aldehyde dehydrogenase family. As to quaternary structure, dimer of dimers. K(+) serves as cofactor.

The catalysed reaction is betaine aldehyde + NAD(+) + H2O = glycine betaine + NADH + 2 H(+). It participates in amine and polyamine biosynthesis; betaine biosynthesis via choline pathway; betaine from betaine aldehyde: step 1/1. Involved in the biosynthesis of the osmoprotectant glycine betaine. Catalyzes the irreversible oxidation of betaine aldehyde to the corresponding acid. In Pseudomonas putida (strain ATCC 700007 / DSM 6899 / JCM 31910 / BCRC 17059 / LMG 24140 / F1), this protein is Betaine aldehyde dehydrogenase.